We begin with the raw amino-acid sequence, 151 residues long: Ubiquitin-conjugating enzyme E2 2 (151 aa).

The region spanning 4–150 (AARRRLMRDF…VRETVERSWE (147 aa)) is the UBC core domain. Catalysis depends on Cys88, which acts as the Glycyl thioester intermediate.

The protein belongs to the ubiquitin-conjugating enzyme family.

Its subcellular location is the cytoplasm. It is found in the nucleus. The catalysed reaction is S-ubiquitinyl-[E1 ubiquitin-activating enzyme]-L-cysteine + [E2 ubiquitin-conjugating enzyme]-L-cysteine = [E1 ubiquitin-activating enzyme]-L-cysteine + S-ubiquitinyl-[E2 ubiquitin-conjugating enzyme]-L-cysteine.. The protein operates within protein modification; protein ubiquitination. Functionally, catalyzes the covalent attachment of ubiquitin to other proteins. Plays a role in transcription regulation by catalyzing the monoubiquitination of histone H2B to form H2BK123ub1. H2BK123ub1 gives a specific tag for epigenetic transcriptional activation and is also a prerequisite for H3K4me and H3K79me formation. Also involved in postreplication repair of UV-damaged DNA, in N-end rule-dependent protein degradation and in sporulation. The chain is Ubiquitin-conjugating enzyme E2 2 (UBC2) from Trichoderma harzianum (Hypocrea lixii).